Reading from the N-terminus, the 378-residue chain is Serpin B6 (378 aa).

Residue Met1 is modified to N-acetylmethionine. N6-acetyllysine is present on Lys196.

The protein belongs to the serpin family. Ov-serpin subfamily. Forms a complex with the monomeric form of beta-tryptase. As to expression, brain.

It localises to the cytoplasm. In terms of biological role, inhibitor of cathepsin G, kallikrein-8 and thrombin. May play an important role in the inner ear in the protection against leakage of lysosomal content during stress. May be involved in the regulation of serine proteinases present in the brain or extravasated from the blood. The protein is Serpin B6 (SERPINB6) of Bos taurus (Bovine).